The following is a 325-amino-acid chain: Glutarate 2-hydroxylase (325 aa).

3 residues coordinate Fe cation: histidine 160, aspartate 162, and histidine 292.

This sequence belongs to the glutarate hydroxylase family. In terms of assembly, homotetramer. Requires Fe(2+) as cofactor.

The enzyme catalyses glutarate + 2-oxoglutarate + O2 = (S)-2-hydroxyglutarate + succinate + CO2. It participates in amino-acid degradation. Functionally, acts as an alpha-ketoglutarate-dependent dioxygenase catalyzing hydroxylation of glutarate (GA) to L-2-hydroxyglutarate (L2HG). Functions in a L-lysine degradation pathway that proceeds via cadaverine, glutarate and L-2-hydroxyglutarate. The chain is Glutarate 2-hydroxylase from Escherichia coli O6:H1 (strain CFT073 / ATCC 700928 / UPEC).